Consider the following 148-residue polypeptide: uncharacterized protein (148 aa).

This is an uncharacterized protein from Haemophilus influenzae (strain ATCC 51907 / DSM 11121 / KW20 / Rd).